We begin with the raw amino-acid sequence, 624 residues long: tRNA uridine 5-carboxymethylaminomethyl modification enzyme MnmG (624 aa).

Residues 13-18, V125, and S180 each bind FAD; that span reads GGGHAG. 273 to 287 is a binding site for NAD(+); the sequence is GPRYCPSIEDKIVRF. Residue Q370 participates in FAD binding.

This sequence belongs to the MnmG family. In terms of assembly, homodimer. Heterotetramer of two MnmE and two MnmG subunits. Requires FAD as cofactor.

It is found in the cytoplasm. Its function is as follows. NAD-binding protein involved in the addition of a carboxymethylaminomethyl (cmnm) group at the wobble position (U34) of certain tRNAs, forming tRNA-cmnm(5)s(2)U34. The sequence is that of tRNA uridine 5-carboxymethylaminomethyl modification enzyme MnmG from Legionella pneumophila (strain Corby).